We begin with the raw amino-acid sequence, 216 residues long: UPF0301 protein BBta_6966 (216 aa).

It belongs to the UPF0301 (AlgH) family.

This chain is UPF0301 protein BBta_6966, found in Bradyrhizobium sp. (strain BTAi1 / ATCC BAA-1182).